A 94-amino-acid chain; its full sequence is Evasin P1104 (94 aa).

The N-terminal stretch at 1–28 (MASNLFTIFQLAGFVAIVFIVNLHSVSA) is a signal peptide. Intrachain disulfides connect Cys48/Cys66, Cys52/Cys68, and Cys62/Cys79. Asn51 carries N-linked (GlcNAc...) asparagine glycosylation.

The protein localises to the secreted. Functionally, salivary chemokine-binding protein which binds to host chemokines CXCL1, CXCL2, CXCL3, CXCL5, CXCL6, CXCL12 and CXCL13. This Ixodes ricinus (Common tick) protein is Evasin P1104.